Reading from the N-terminus, the 607-residue chain is Guanine nucleotide-binding protein-like 1 (607 aa).

A compositionally biased stretch (basic residues) spans 1–14 (MPRKKPFSVKQKKK). A disordered region spans residues 1–81 (MPRKKPFSVK…GPRGYDPNRY (81 aa)). Basic and acidic residues predominate over residues 15–26 (QLQDKRERKRGL). Phosphoserine is present on residues S32, S33, and S34. Residues T48 and T50 each carry the phosphothreonine modification. 2 positions are modified to phosphoserine: S51 and S68. A CP-type G domain is found at 178–418 (WRQLWRVLEM…LCDCPGLIFP (241 aa)). 225-228 (NKVD) serves as a coordination point for GTP. At S324 the chain carries Phosphoserine. Residues 367–374 (GFPNVGKS) and 411–415 (DCPGL) each bind GTP. The interval 547 to 607 (GPAGDEEEEE…PYALLGEDEC (61 aa)) is disordered. Residues 550–584 (GDEEEEEEEELSSSCEEEGEEDRDADEEGEGDEET) show a composition bias toward acidic residues. Phosphoserine is present on residues S561, S562, and S563.

Belongs to the TRAFAC class YlqF/YawG GTPase family.

In terms of biological role, possible regulatory or functional link with the histocompatibility cluster. This Homo sapiens (Human) protein is Guanine nucleotide-binding protein-like 1 (GNL1).